A 139-amino-acid polypeptide reads, in one-letter code: Large ribosomal subunit protein bL17 (139 aa).

The segment at 120-139 (ESAKGQDSGPVHVEGDEEAA) is disordered.

It belongs to the bacterial ribosomal protein bL17 family. As to quaternary structure, part of the 50S ribosomal subunit. Contacts protein L32.

The sequence is that of Large ribosomal subunit protein bL17 from Parvibaculum lavamentivorans (strain DS-1 / DSM 13023 / NCIMB 13966).